The following is an 866-amino-acid chain: Oxidation resistance protein 1 (866 aa).

A disordered region spans residues 1 to 92 (MSVSNLSWLK…KKDGRRMSFQ (92 aa)). Residues 63 to 88 (RKSELKRFYTIDTGQKKTLDKKDGRR) show a composition bias toward basic and acidic residues. Serine 90 is subject to Phosphoserine. One can recognise a LysM domain in the interval 98–141 (IEYTVESRDSLNSIALKFDTTPNELVQLNKLFSRAVVTGQVLYV). Threonine 118 bears the Phosphothreonine mark. Positions 150 to 168 (VESSPSLSPVSPLSPTSSE) are enriched in low complexity. The interval 150 to 202 (VESSPSLSPVSPLSPTSSEAEFDKTTTPDVAHPKEAPPASTVSGIRPARVVSS) is disordered. A compositionally biased stretch (basic and acidic residues) spans 170-184 (EFDKTTTPDVAHPKE). 3 positions are modified to phosphoserine: serine 201, serine 202, and serine 204. One can recognise a GRAM domain in the interval 213-268 (KFLKINCKYITIGKGTVSGVLLVTPNNIMFDPHKTDPLVQENGCEEYGIMCPMEEV). The interval 293–540 (LSGRGSCHSK…AHGEGSSLLK (248 aa)) is disordered. A phosphoserine mark is found at serine 294, serine 334, and serine 336. Threonine 341 bears the Phosphothreonine mark. Serine 346 bears the Phosphoserine mark. A compositionally biased stretch (basic and acidic residues) spans 347–363 (PIREELLSSEPRQEKSS). Residues 364 to 399 (DASSESVQTVSQMEVQSLTATSEAANVPDRTSSNPG) are compositionally biased toward polar residues. A compositionally biased stretch (basic and acidic residues) spans 433–447 (QSTEVKGQDNQDSSH). Positions 448–465 (QESSLQQEAGEDSVSSGE) are enriched in polar residues. Basic and acidic residues predominate over residues 483-497 (ELKRDSETEVEELRK). Serine 488 is subject to Phosphoserine. Positions 502 to 519 (HSMQQAKQQRDTIQQVSQ) are enriched in polar residues. Residues 543-570 (RRHRLHKFLCLRVGKPMRKTFVSQASAT) form a mediates oxidative antimutator activity region. The interval 682 to 703 (KQVAPAKADLEPESFRPNLSDP) is disordered. The TLDc domain maps to 705 to 866 (ELLLPDQIEK…IQDIEIWAFE (162 aa)).

This sequence belongs to the OXR1 family. In terms of tissue distribution, highly expressed in brain and testis.

It is found in the mitochondrion. The protein localises to the nucleus. Its subcellular location is the nucleolus. Functionally, may be involved in protection from oxidative damage. In Mus musculus (Mouse), this protein is Oxidation resistance protein 1 (Oxr1).